Consider the following 448-residue polypeptide: Homogentisate 1,2-dioxygenase (448 aa).

Fe cation-binding residues include histidine 340, glutamate 346, and histidine 377.

The protein belongs to the homogentisate dioxygenase family. It depends on Fe cation as a cofactor.

It catalyses the reaction homogentisate + O2 = 4-maleylacetoacetate + H(+). Its pathway is amino-acid degradation; L-phenylalanine degradation; acetoacetate and fumarate from L-phenylalanine: step 4/6. In Emericella nidulans (strain FGSC A4 / ATCC 38163 / CBS 112.46 / NRRL 194 / M139) (Aspergillus nidulans), this protein is Homogentisate 1,2-dioxygenase (hmgA).